Here is a 612-residue protein sequence, read N- to C-terminus: Sulfite reductase [NADPH] hemoprotein beta-component (612 aa).

The segment at 1-26 (MDDHKPIETPDGPAVDTPGIGARRYE) is disordered. Cys469, Cys475, Cys514, and Cys518 together coordinate [4Fe-4S] cluster. Position 518 (Cys518) interacts with siroheme.

It belongs to the nitrite and sulfite reductase 4Fe-4S domain family. In terms of assembly, alpha(8)-beta(8). The alpha component is a flavoprotein, the beta component is a hemoprotein. Requires siroheme as cofactor. The cofactor is [4Fe-4S] cluster.

It catalyses the reaction hydrogen sulfide + 3 NADP(+) + 3 H2O = sulfite + 3 NADPH + 4 H(+). It participates in sulfur metabolism; hydrogen sulfide biosynthesis; hydrogen sulfide from sulfite (NADPH route): step 1/1. Component of the sulfite reductase complex that catalyzes the 6-electron reduction of sulfite to sulfide. This is one of several activities required for the biosynthesis of L-cysteine from sulfate. The polypeptide is Sulfite reductase [NADPH] hemoprotein beta-component (Methylorubrum extorquens (strain CM4 / NCIMB 13688) (Methylobacterium extorquens)).